The primary structure comprises 236 residues: Phosphoglycolate phosphatase (236 aa).

Asp14 (nucleophile) is an active-site residue. Residues Asp14, Asp16, and Asp177 each contribute to the Mg(2+) site.

The protein belongs to the HAD-like hydrolase superfamily. CbbY/CbbZ/Gph/YieH family. Mg(2+) serves as cofactor.

The catalysed reaction is 2-phosphoglycolate + H2O = glycolate + phosphate. It participates in organic acid metabolism; glycolate biosynthesis; glycolate from 2-phosphoglycolate: step 1/1. Specifically catalyzes the dephosphorylation of 2-phosphoglycolate. Is involved in the dissimilation of the intracellular 2-phosphoglycolate formed during the DNA repair of 3'-phosphoglycolate ends, a major class of DNA lesions induced by oxidative stress. The polypeptide is Phosphoglycolate phosphatase (Neisseria gonorrhoeae (strain ATCC 700825 / FA 1090)).